The chain runs to 683 residues: Solute carrier family 28 member 3 (683 aa).

A disordered region spans residues 1 to 71; the sequence is MSAFKARGVE…EEEEEGEEDQ (71 aa). Residues 1-97 are Cytoplasmic-facing; it reads MSAFKARGVE…FYKRNKKIIH (97 aa). Over residues 60 to 71 the composition is skewed to acidic residues; the sequence is DNEEEEEGEEDQ. The helical transmembrane segment at 98–118 threads the bilayer; the sequence is YTFLGLLLVGYFALVIAACIV. Residues 119–123 are Extracellular-facing; it reads NFKQS. Residues 124-144 form a helical membrane-spanning segment; that stretch reads LALLVLTLIAIFFFFWDLFIA. Residues 145-168 are Cytoplasmic-facing; the sequence is KYGDKIAEALKPCQKFLDNHWSII. Residues 169-189 form a helical membrane-spanning segment; the sequence is RWFVYGALLLAVILWLTLDTA. The Extracellular portion of the chain corresponds to 190–192; the sequence is KRG. The helical transmembrane segment at 193-214 threads the bilayer; sequence ANQVIPFFGLILYILLVFIFSK. Residues 215–222 are Cytoplasmic-facing; it reads HPTKVRWR. The chain crosses the membrane as a helical span at residues 223 to 242; that stretch reads IVIWGLLLQFIFGLIILRTK. The Extracellular segment spans residues 243 to 279; that stretch reads PGLDAFNWLGIQVQTFLKYTDAGSRFLFGDDFQDHFF. The chain crosses the membrane as a helical span at residues 280–300; that stretch reads AFAVLPIVIFFSTVMSMMYYL. Over 301-324 the chain is Cytoplasmic; that stretch reads GLMQWLILKVGWLMQITMGTSPME. An intramembrane region (helical) is located at residues 325 to 343; that stretch reads SMVSAGNIFVGQTESPLLI. At 344-356 the chain is on the cytoplasmic side; that stretch reads RPYLADLTISEMH. A helical transmembrane segment spans residues 357–379; the sequence is SVMSSGFATIAGSVLGAYISLGI. The Extracellular segment spans residues 380-381; sequence PA. Residues 382 to 403 form a helical membrane-spanning segment; the sequence is AHLLTASVMSAPAALAISKTFW. At 404–438 the chain is on the cytoplasmic side; sequence PETKKSKNSTQTSIKLEKGQENNLVEAASQGASAA. Residues 439–464 form a helical membrane-spanning segment; the sequence is VPLVANIAANLIAFLAVLAFINATLS. At 465 to 502 the chain is on the extracellular side; that stretch reads WLGSMFNYPQFSFEIICSYVLMPFAFMMGVNYDDSFLV. Positions 503-522 form an intramembrane region, helical; it reads AELLGMKTFFNEFVAYQRLS. Over 523–561 the chain is Extracellular; the sequence is EYIHNRESGGPLFVDGVRQYMSVRSEAIATYALCGFANF. A helical transmembrane segment spans residues 562 to 572; it reads GSLGIMIGGLS. Residues 573–585 are Cytoplasmic-facing; it reads SLAPHRKSDIASC. A helical transmembrane segment spans residues 586–608; sequence GIRALIAGTIACFSTACIAGVLY. At 609 to 683 the chain is on the extracellular side; it reads IPELYCPNLL…GFNCSEVRPE (75 aa).

The protein belongs to the concentrative nucleoside transporter (CNT) (TC 2.A.41) family. In terms of assembly, homotrimer.

The protein localises to the cell membrane. It catalyses the reaction thymidine(out) + 2 Na(+)(out) = thymidine(in) + 2 Na(+)(in). The enzyme catalyses cytidine(out) + 2 Na(+)(out) = cytidine(in) + 2 Na(+)(in). The catalysed reaction is uridine(out) + 2 Na(+)(out) = uridine(in) + 2 Na(+)(in). It carries out the reaction adenosine(out) + 2 Na(+)(out) = adenosine(in) + 2 Na(+)(in). It catalyses the reaction guanosine(out) + 2 Na(+)(out) = guanosine(in) + 2 Na(+)(in). The enzyme catalyses inosine(out) + 2 Na(+)(out) = inosine(in) + 2 Na(+)(in). Sodium-dependent, pyrimidine- and purine-selective. Involved in the homeostasis of endogenous nucleosides. Exhibits the transport characteristics of the nucleoside transport system cib or N3 subtype (N3/cib) (with marked transport of both thymidine and inosine). Employs a 2:1 sodium/nucleoside ratio. Also able to transport gemcitabine, 3'-azido-3'-deoxythymidine (AZT), ribavirin and 3-deazauridine. This is Solute carrier family 28 member 3 (SLC28A3) from Eptatretus stoutii (Pacific hagfish).